A 207-amino-acid polypeptide reads, in one-letter code: Ras-related protein Rab-7a (207 aa).

T2 carries the N-acetylthreonine modification. S17, G18, V19, G20, K21, T22, S23, S34, N35, Y37, and T40 together coordinate GTP. T22 contributes to the Mg(2+) binding site. The Switch 1 motif lies at 28–41 (YVNKKFSNQYKATI). Residues T40 and D63 each coordinate Mg(2+). G66 provides a ligand contact to GTP. Positions 67 to 82 (QERFQSLSVAFYRGAD) match the Switch 2 motif. A Phosphoserine modification is found at S72. The GTP site is built by N125, K126, D128, A156, and K157. Glycyl lysine isopeptide (Lys-Gly) (interchain with G-Cter in ubiquitin) cross-links involve residues K191 and K194. 2 S-geranylgeranyl cysteine lipidation sites follow: C205 and C207. Cysteine methyl ester is present on C207.

Belongs to the small GTPase superfamily. Rab family. Interacts with NTRK1/TRKA. Interacts with RILP. Interacts with PSMA7. Interacts with RNF115. Interacts with FYCO1. Interacts with the PIK3C3/VPS34-PIK3R4 complex. The GTP-bound form interacts with OSBPL1A. The GTP-bound form interacts with RAC1. Interacts with CLN3. Interacts with CHM, the substrate-binding subunit of the Rab geranylgeranyltransferase complex. Interacts with C9orf72. Does not interact with HPS4 and the BLOC-3 complex (heterodimer of HPS1 and HPS4). Interacts with CLN5. Interacts with PLEKHM1 (via N- and C-terminus). Interacts with PRPH; the interaction is direct. Interacts with VPS13A. The GDP-bound form interacts with RIMOC1. Interacts with the MON1A-CCZ1B complex and this interaction is enhanced in the presence of RIMOC1. Interacts with VPS39 and VPS41. Forms a ternary complex with LAMP2 and RUFY4; the interaction with LAMP2 is mediated by RUFY4 (via RUN and coiled coil domains). Mg(2+) serves as cofactor. Deubiquitination at Lys-191 and Lys-194 by USP32. In terms of processing, phosphorylated at Ser-72 by LRRK1; phosphorylation is dependent on protein kinase C (PKC) activation of LRRK1. Post-translationally, prenylated. Prenylation is required for association with cellular membranes.

The protein resides in the cytoplasmic vesicle. It is found in the phagosome membrane. The protein localises to the late endosome membrane. Its subcellular location is the lysosome membrane. It localises to the melanosome membrane. The protein resides in the autophagosome membrane. It is found in the lipid droplet. The protein localises to the endosome membrane. Its subcellular location is the mitochondrion membrane. The enzyme catalyses GTP + H2O = GDP + phosphate + H(+). Its activity is regulated as follows. Regulated by guanine nucleotide exchange factors (GEFs) which promote the exchange of bound GDP for free GTP. Regulated by GTPase activating proteins (GAPs) which increase the GTP hydrolysis activity. Inhibited by GDP dissociation inhibitors (GDIs). The small GTPases Rab are key regulators of intracellular membrane trafficking, from the formation of transport vesicles to their fusion with membranes. Rabs cycle between an inactive GDP-bound form and an active GTP-bound form that is able to recruit to membranes different sets of downstream effectors directly responsible for vesicle formation, movement, tethering and fusion. In its active state, RAB7A binds to a variety of effector proteins playing a key role in the regulation of endo-lysosomal trafficking. Governs early-to-late endosomal maturation, microtubule minus-end as well as plus-end directed endosomal migration and positioning, and endosome-lysosome transport through different protein-protein interaction cascades. Also plays a central role in growth-factor-mediated cell signaling, nutrient-transporter-mediated nutrient uptake, neurotrophin transport in the axons of neurons and lipid metabolism. Also involved in regulation of some specialized endosomal membrane trafficking, such as maturation of melanosomes, pathogen-induced phagosomes (or vacuoles) and autophagosomes. Plays a role in the maturation and acidification of phagosomes that engulf pathogens, such as S.aureus and Mycobacteria. Plays a role in the fusion of phagosomes with lysosomes. In concert with RAC1, plays a role in regulating the formation of RBs (ruffled borders) in osteoclasts. Controls the endosomal trafficking and neurite outgrowth signaling of NTRK1/TRKA. Regulates the endocytic trafficking of the EGF-EGFR complex by regulating its lysosomal degradation. Involved in the ADRB2-stimulated lipolysis through lipophagy, a cytosolic lipase-independent autophagic pathway. Required for the exosomal release of SDCBP, CD63 and syndecan. Required for vesicular trafficking and cell surface expression of ACE2. May play a role in PRPH neuronal intermediate filament assembly. In Oryctolagus cuniculus (Rabbit), this protein is Ras-related protein Rab-7a (RAB7A).